We begin with the raw amino-acid sequence, 970 residues long: Transcriptional activator protein DAL81 (970 aa).

Disordered regions lie at residues 1–44, 64–95, and 118–140; these read MDPH…NHDI, NILR…QQQS, and DNVS…NNDI. 3 stretches are compositionally biased toward low complexity: residues 15–41, 73–94, and 121–140; these read TKSV…NNSN, QQQQ…QQQQ, and SNSA…NNDI. The zn(2)-C6 fungal-type DNA-binding region spans 150 to 179; that stretch reads CNQCRLKKTKCNYFPDLGNCLECETSRTKC. The segment covering 807–823 has biased composition (low complexity); the sequence is SFPNGTTSTTTPVNPTS. Positions 807 to 970 are disordered; that stretch reads SFPNGTTSTT…VTINTRETPL (164 aa). Polar residues-rich tracts occupy residues 824–836 and 858–870; these read RQTQ…SPAI and KTSQ…TPSH. Phosphoserine is present on Ser-833. Low complexity predominate over residues 875–894; that stretch reads PPSNTSSPRVNSSTNVNSNT. Residues 895 to 906 show a composition bias toward polar residues; sequence QMNASPLTSINE. The segment covering 907-938 has biased composition (basic and acidic residues); sequence TRQESGDAADEKTAGRERTANEESSTELKDDN. Polar residues-rich tracts occupy residues 939-954 and 961-970; these read PNSN…QTIK and VTINTRETPL.

Its subcellular location is the nucleus. Positive regulation of genes required for catabolism of GABA (UGA4, UGA1, and UGA2), urea (DUR1 and DUR2), arginine and allantoin. This chain is Transcriptional activator protein DAL81 (DAL81), found in Saccharomyces cerevisiae (strain ATCC 204508 / S288c) (Baker's yeast).